The sequence spans 282 residues: Sulfur carrier protein FdhD (282 aa).

The active-site Cysteine persulfide intermediate is the Cys-115.

The protein belongs to the FdhD family.

It is found in the cytoplasm. In terms of biological role, required for formate dehydrogenase (FDH) activity. Acts as a sulfur carrier protein that transfers sulfur from IscS to the molybdenum cofactor prior to its insertion into FDH. The protein is Sulfur carrier protein FdhD of Streptomyces coelicolor (strain ATCC BAA-471 / A3(2) / M145).